Consider the following 133-residue polypeptide: Small ribosomal subunit protein uS9 (133 aa).

Belongs to the universal ribosomal protein uS9 family.

The sequence is that of Small ribosomal subunit protein uS9 from Ureaplasma parvum serovar 3 (strain ATCC 700970).